Reading from the N-terminus, the 874-residue chain is Alanine--tRNA ligase (874 aa).

Zn(2+) is bound by residues histidine 562, histidine 566, cysteine 665, and histidine 669.

Belongs to the class-II aminoacyl-tRNA synthetase family. Zn(2+) is required as a cofactor.

It is found in the cytoplasm. It carries out the reaction tRNA(Ala) + L-alanine + ATP = L-alanyl-tRNA(Ala) + AMP + diphosphate. Catalyzes the attachment of alanine to tRNA(Ala) in a two-step reaction: alanine is first activated by ATP to form Ala-AMP and then transferred to the acceptor end of tRNA(Ala). Also edits incorrectly charged Ser-tRNA(Ala) and Gly-tRNA(Ala) via its editing domain. The polypeptide is Alanine--tRNA ligase (Pseudomonas fluorescens (strain Pf0-1)).